A 304-amino-acid chain; its full sequence is D-tagatose-1-phosphate kinase (304 aa).

Catalysis depends on D250, which acts as the Proton acceptor.

This sequence belongs to the carbohydrate kinase PfkB family. Mg(2+) serves as cofactor.

It catalyses the reaction alpha-D-tagatopyranose 1-phosphate + ATP = D-tagatofuranose 1,6-bisphosphate + ADP + H(+). It functions in the pathway carbohydrate degradation. Its activity is regulated as follows. Activity is inhibited by tagatose-6-phosphate and fructose-6-phosphate. In terms of biological role, kinase involved in a D-tagatose catabolic pathway. Catalyzes the phosphorylation of D-tagatose-1-phosphate (Tag-1P) to D-tagatose-1,6-bisphosphate. Can also use D-fructose-1-phosphate, with 40-fold lower catalytic efficiency, but not tagatose-6-phosphate or fructose-6-phosphate. The substrate, which occurs in a pyranose form in solution, may undergo a change to the furanose conformation after binding to the enzyme, in order to permit phosphorylation at C-6. The protein is D-tagatose-1-phosphate kinase of Bacillus licheniformis (strain ATCC 14580 / DSM 13 / JCM 2505 / CCUG 7422 / NBRC 12200 / NCIMB 9375 / NCTC 10341 / NRRL NRS-1264 / Gibson 46).